We begin with the raw amino-acid sequence, 381 residues long: Pre-mRNA-splicing factor cwf28 (381 aa).

The interval 1 to 21 (MKRKAVLEAFSDSEDEDEKKL) is disordered. Phosphoserine is present on residues serine 11 and serine 13. Residues 104 to 157 (AADNEIVDWKANNSNEKAQNKIATNKESTDILPEEVQLVLNDLNDDVKSANSAN) adopt a coiled-coil conformation. The tract at residues 262-381 (LNSQNEHTEV…DRSYRSTRTL (120 aa)) is disordered. A compositionally biased stretch (polar residues) spans 274-285 (KSNSIDNLTPSS). Serine 275 and serine 277 each carry phosphoserine. Basic and acidic residues-rich tracts occupy residues 287 to 297 (LFRKRSRDNNL), 306 to 332 (KHLD…EYHS), and 362 to 375 (SDRY…DRSY).

Belongs to the SPP2 family. As to quaternary structure, belongs to the 40S cdc5-associated complex (or cwf complex), a spliceosome sub-complex reminiscent of a late-stage spliceosome composed of the U2, U5 and U6 snRNAs and at least brr2, cdc5, cwf2/prp3, cwf3/syf1, cwf4/syf3, cwf5/ecm2, spp42/cwf6, cwf7/spf27, cwf8, cwf9, cwf10, cwf11, cwf12, prp45/cwf13, cwf14, cwf15, cwf16, cwf17, cwf18, cwf19, cwf20, cwf21, cwf22, cwf23, cwf24, cwf25, cwf26, cyp7/cwf27, cwf28, cwf29/ist3, lea1, msl1, prp5/cwf1, prp10, prp12/sap130, prp17, prp22, sap61, sap62, sap114, sap145, slu7, smb1, smd1, smd3, smf1, smg1 and syf2.

It is found in the nucleus. In terms of biological role, involved in spliceosome maturation and the first step of pre-mRNA splicing. In Schizosaccharomyces pombe (strain 972 / ATCC 24843) (Fission yeast), this protein is Pre-mRNA-splicing factor cwf28 (cwf28).